We begin with the raw amino-acid sequence, 269 residues long: Hydroxyethylthiazole kinase (269 aa).

Residue methionine 45 coordinates substrate. Positions 121 and 167 each coordinate ATP. Substrate is bound at residue glycine 194.

The protein belongs to the Thz kinase family. Requires Mg(2+) as cofactor.

The catalysed reaction is 5-(2-hydroxyethyl)-4-methylthiazole + ATP = 4-methyl-5-(2-phosphooxyethyl)-thiazole + ADP + H(+). It participates in cofactor biosynthesis; thiamine diphosphate biosynthesis; 4-methyl-5-(2-phosphoethyl)-thiazole from 5-(2-hydroxyethyl)-4-methylthiazole: step 1/1. In terms of biological role, catalyzes the phosphorylation of the hydroxyl group of 4-methyl-5-beta-hydroxyethylthiazole (THZ). This Bacillus licheniformis (strain ATCC 14580 / DSM 13 / JCM 2505 / CCUG 7422 / NBRC 12200 / NCIMB 9375 / NCTC 10341 / NRRL NRS-1264 / Gibson 46) protein is Hydroxyethylthiazole kinase.